The sequence spans 450 residues: Bifunctional apoptosis regulator (450 aa).

Residues 1 to 20 are compositionally biased toward basic and acidic residues; sequence MEEPQKNDLSMREQEEEHPV. Residues 1-25 form a disordered region; that stretch reads MEEPQKNDLSMREQEEEHPVRSSGP. Residues 1-140 are Cytoplasmic-facing; it reads MEEPQKNDLS…PSTGRVNPQR (140 aa). An RING-type zinc finger spans residues 34–74; it reads CHCCYDTLVNPTTLNCGHSFCRHCLALWWMSSKKTECPECR. The chain crosses the membrane as a helical span at residues 141 to 161; it reads GGGFFSGVLTALTGVAVILLV. The Extracellular portion of the chain corresponds to 162 to 331; the sequence is YHWRSRESEH…REPTWKQWRE (170 aa). The SAM domain maps to 182 to 249; the sequence is WTMEEVVLWL…LTELERVRAL (68 aa). N-linked (GlcNAc...) asparagine glycans are attached at residues N232 and N308. The chain crosses the membrane as a helical span at residues 332 to 352; that stretch reads FLVKYSFLPYQLIAEFAWDWL. The Cytoplasmic segment spans residues 353-360; the sequence is EVHYWTSR. Residues 361–381 traverse the membrane as a helical segment; that stretch reads FLIVNAVLLSVLELFSFWRIW. At 382-404 the chain is on the extracellular side; that stretch reads SRSELKTVPQRMWSHFWKVSTQG. The helical transmembrane segment at 405–425 threads the bilayer; the sequence is LFMAMFWPLIPQFVCNCLFYW. Topologically, residues 426–450 are cytoplasmic; it reads ALYFNPIINIDLVVKEVRRLETQVL.

Interacts with CASP8, BCL2 and BCL2L1 through SAM domain and also with HIP1, IFT57, ESRRBL1 and BCAP31. Interacts with NGFR; this interaction inhibits NF-kappa-B and JNK-related signaling pathways. Mediates RING-dependent self-ubiquitination leading to proteasomal degradation.

The protein resides in the endoplasmic reticulum membrane. The catalysed reaction is S-ubiquitinyl-[E2 ubiquitin-conjugating enzyme]-L-cysteine + [acceptor protein]-L-lysine = [E2 ubiquitin-conjugating enzyme]-L-cysteine + N(6)-ubiquitinyl-[acceptor protein]-L-lysine.. Its function is as follows. Membrane-bound E3 ubiquitin ligase that plays a role in several processes including apoptosis regulation or reticulum endoplasmic stress. Has anti-apoptotic activity, both for apoptosis triggered via death-receptors and via mitochondrial factors. Contributes to the dynamic control of IRE1/ERN1 signaling during ER stress by inducing BAX inhibitor 1/TMBIM6 proteasomal degradation. Promotes the activation of TGF-beta signaling by mediating the 'Lys-63'-linked ubiquitination of TGFBR1 which is critical to activate the pathway. Together with NGFR, negatively regulates NF-kappa-B and JNK-related signaling pathways. Promotes the proteasome-mediated degradation of PNPLA3, a protein involveld in lipid metabolism. This is Bifunctional apoptosis regulator (Bfar) from Mus musculus (Mouse).